A 529-amino-acid polypeptide reads, in one-letter code: Phosphoenolpyruvate carboxykinase (ATP) (529 aa).

Residues Arg55, Tyr190, and Lys196 each contribute to the substrate site. ATP-binding positions include Lys196, His215, and 231–239 (GLSGTGKTT). Positions 196 and 215 each coordinate Mn(2+). Asp252 serves as a coordination point for Mn(2+). 3 residues coordinate ATP: Glu280, Arg317, and Thr442. Arg317 provides a ligand contact to substrate.

It belongs to the phosphoenolpyruvate carboxykinase (ATP) family. Requires Mn(2+) as cofactor.

Its subcellular location is the cytoplasm. It catalyses the reaction oxaloacetate + ATP = phosphoenolpyruvate + ADP + CO2. The protein operates within carbohydrate biosynthesis; gluconeogenesis. In terms of biological role, involved in the gluconeogenesis. Catalyzes the conversion of oxaloacetate (OAA) to phosphoenolpyruvate (PEP) through direct phosphoryl transfer between the nucleoside triphosphate and OAA. The polypeptide is Phosphoenolpyruvate carboxykinase (ATP) (Deinococcus geothermalis (strain DSM 11300 / CIP 105573 / AG-3a)).